A 385-amino-acid polypeptide reads, in one-letter code: WD repeat-containing protein 74 (385 aa).

WD repeat units lie at residues 40–80 (RREE…FQGQ), 83–122 (CPGG…ASSD), 128–168 (RVGP…EPLF), 179–220 (DLRV…RRPV), 224–266 (TYGE…GCLK), and 267–306 (GLAG…GLEH). Phosphoserine is present on Ser214. Lys311 is subject to N6-methyllysine. The interval 320–385 (SGRDNWEDEP…KKKRPGSTSS (66 aa)) is required for nucleolar and nuclear location. A disordered region spans residues 323 to 385 (DNWEDEPQEP…KKKRPGSTSS (63 aa)). Residues 372–385 (ARRRKKKRPGSTSS) are compositionally biased toward basic residues.

In terms of assembly, isoform 1 interacts (through WDR repeats) with NVL; the interaction is independent of RNA or pre-60S ribosome particles. Isoform 2 does not interact with NVL. Interacts with MTREX; the interaction dissociation in a late stage of rRNA synthesis is required for appropriate maturation of pre-60S particles and depends on the ATPase activity of NVL.

Its subcellular location is the nucleus. It is found in the nucleolus. Functionally, regulatory protein of the MTREX-exosome complex involved in the synthesis of the 60S ribosomal subunit. Participates in an early cleavage of the pre-rRNA processing pathway in cooperation with NVL. The chain is WD repeat-containing protein 74 (WDR74) from Bos taurus (Bovine).